The sequence spans 133 residues: MAPNDIISDMLTRIRNACAVRHPTTVVPTTKMTRSIAQVLKEEGFIEGFEEVGEGVKKHLVISLKYKSRGRQPIINTLQRVSKPGLRVYSNRKDLPRVLGGIGIAIISTSKGIMTDREARRQNVGGEVLCYVW.

It belongs to the universal ribosomal protein uS8 family. As to quaternary structure, part of the 30S ribosomal subunit. Contacts proteins S5 and S12.

In terms of biological role, one of the primary rRNA binding proteins, it binds directly to 16S rRNA central domain where it helps coordinate assembly of the platform of the 30S subunit. The polypeptide is Small ribosomal subunit protein uS8 (Crocosphaera subtropica (strain ATCC 51142 / BH68) (Cyanothece sp. (strain ATCC 51142))).